The following is a 30-amino-acid chain: Cycloviolacin-O10 (30 aa).

Positions 1–30 (GIPCGESCVYIPCLTSAVGCSCKSKVCYRN) form a cross-link, cyclopeptide (Gly-Asn). 3 disulfides stabilise this stretch: Cys-4/Cys-20, Cys-8/Cys-22, and Cys-13/Cys-27.

This is a cyclic peptide. Expressed in petals and roots but not in leaves, petioles and runners (at protein level).

In terms of biological role, probably participates in a plant defense mechanism. This Viola odorata (Sweet violet) protein is Cycloviolacin-O10.